A 431-amino-acid polypeptide reads, in one-letter code: Enolase (431 aa).

Glutamine 167 is a binding site for (2R)-2-phosphoglycerate. Glutamate 209 serves as the catalytic Proton donor. Residues aspartate 246, glutamate 289, and aspartate 316 each contribute to the Mg(2+) site. Lysine 341, arginine 370, serine 371, and lysine 392 together coordinate (2R)-2-phosphoglycerate. Lysine 341 serves as the catalytic Proton acceptor.

This sequence belongs to the enolase family. As to quaternary structure, component of the RNA degradosome, a multiprotein complex involved in RNA processing and mRNA degradation. The cofactor is Mg(2+).

It localises to the cytoplasm. Its subcellular location is the secreted. The protein localises to the cell surface. The enzyme catalyses (2R)-2-phosphoglycerate = phosphoenolpyruvate + H2O. The protein operates within carbohydrate degradation; glycolysis; pyruvate from D-glyceraldehyde 3-phosphate: step 4/5. In terms of biological role, catalyzes the reversible conversion of 2-phosphoglycerate (2-PG) into phosphoenolpyruvate (PEP). It is essential for the degradation of carbohydrates via glycolysis. The sequence is that of Enolase from Shewanella loihica (strain ATCC BAA-1088 / PV-4).